Here is a 219-residue protein sequence, read N- to C-terminus: GTP-binding protein drn-1 (219 aa).

GTP is bound by residues 37 to 44 (GAGGVGKS), 56 to 62 (NENYVPT), 85 to 89 (DTTGS), 146 to 149 (NKKD), and 177 to 178 (AK). The Effector region signature appears at 59 to 67 (YVPTIEDTY). The residue at position 216 (C216) is a Cysteine methyl ester. A lipid anchor (S-geranylgeranyl cysteine) is attached at C216. A propeptide spans 217–219 (HIM) (removed in mature form).

This sequence belongs to the small GTPase superfamily. Di-Ras family. In terms of assembly, interacts with epac-1 (via C-terminus). In terms of tissue distribution, expressed specifically in neurons including the nerve ring, ventral and dorsal nerve cord motor neurons and tail ganglia.

The protein localises to the cell membrane. Its function is as follows. Displays low GTPase activity and exists predominantly in the GTP-bound form. Together with epac-1, may regulate acetylcholine release at the neuromuscular junctions probably downstream of G-protein gsa-1 and adenylate cyclase acy-1. The sequence is that of GTP-binding protein drn-1 from Caenorhabditis elegans.